We begin with the raw amino-acid sequence, 147 residues long: Large ribosomal subunit protein uL13 (147 aa).

Belongs to the universal ribosomal protein uL13 family. In terms of assembly, part of the 50S ribosomal subunit.

In terms of biological role, this protein is one of the early assembly proteins of the 50S ribosomal subunit, although it is not seen to bind rRNA by itself. It is important during the early stages of 50S assembly. The chain is Large ribosomal subunit protein uL13 from Lactobacillus acidophilus (strain ATCC 700396 / NCK56 / N2 / NCFM).